The primary structure comprises 313 residues: uncharacterized protein (313 aa).

In terms of domain architecture, N-acetyltransferase spans 6-152 (YDILENPEPN…YHASMEKMTG (147 aa)).

To the C-terminal of C.elegans F21C10.9. This is an uncharacterized protein from Caenorhabditis elegans.